The primary structure comprises 420 residues: COP9 signalosome complex subunit 11 (420 aa).

The 170-residue stretch at 177 to 346 (SIHEHPSLVD…VYYKEDLPVG (170 aa)) folds into the PCI domain. A disordered region spans residues 386–420 (VEPLNRSQDMDAFELHEQSEDEEYEEEHLEEGENV). The segment covering 404–420 (SEDEEYEEEHLEEGENV) has biased composition (acidic residues).

As to quaternary structure, component of a COP9 signalosome-like (CSN) complex.

It is found in the cytoplasm. It localises to the nucleus. Functionally, component of the COP9 signalosome (CSN) complex that acts as an regulator of the ubiquitin (Ubl) conjugation pathway by mediating the deneddylation of the cullin subunit of SCF-type E3 ubiquitin-protein ligase complexes The CSN complex is involved in the regulation of the mating pheromone response. PCI8 may also be involved in transcriptional and translational control. This Eremothecium gossypii (strain ATCC 10895 / CBS 109.51 / FGSC 9923 / NRRL Y-1056) (Yeast) protein is COP9 signalosome complex subunit 11 (PCI8).